A 265-amino-acid polypeptide reads, in one-letter code: Cell adhesion molecule CEACAM10 (265 aa).

The first 33 residues, 1 to 33 (MELASAHLHKGQVPWVGLLLTASLLTYWSPATT), serve as a signal peptide directing secretion. 2 Ig-like V-type domains span residues 35–142 (QVTV…HVHP) and 155–262 (QVTV…NVHA). Asn-44, Asn-87, and Asn-224 each carry an N-linked (GlcNAc...) asparagine glycan.

The protein belongs to the immunoglobulin superfamily. CEA family. Abundant in seminal vesicle and traces in epididymis and prostate (at protein level). Highly expressed in seminal vesicle, minor in colon and placenta and, to a lesser extent, in small intestine, caecum, stomach, salivary gland and bone marrow.

The protein resides in the secreted. It localises to the extracellular space. May interact with other CEACAM proteins on the sperm surface. This chain is Cell adhesion molecule CEACAM10, found in Mus musculus (Mouse).